The primary structure comprises 545 residues: MTTNYIFVTGGVVSSLGKGIAAASLAAILEARGLNVTIMKLDPYINVDPGTMSPIQHGEVFVTEDGAETDLDLGHYERFIRTKMTRRNNFTTGRIYSDVLRKERRGDYLGATVQVIPHITNAIKERVLAGGEGHDVVLVEIGGTVGDIESLPFLEAIRQMAVEIGREHTLFMHLTLVPYMAAAGEVKTKPTQHSVKELLSIGIQPDILICRSDRAVPANERAKIALFCNVPEKAVISLKDVDSIYKIPGLLKSQGLDDYICKRFSLTCPEANLAEWEQVIYEEANPAGEVTIGMVGKYIELPDAYKSVIEALKHGGLKNRVTVNIKLIDSQDVETRGVEILKDLDAILIPGGFGYRGVEGKIATARYARENNIPYLGICLGMQVALIEFARNVAGMENANSTEFVPDCKYPVVALITEWRDEDGNVEVRSEKSDLGGTMRLGAQQCQLDDESLVRQLYGEPTITERHRHRYEVNNMLLKPIEAAGLRVAGRSGDDQLVEIIEVPNHPWFVACQFHPEFTSTPRDGHPLFAGFVKAASEYQKRQAK.

The amidoligase domain stretch occupies residues 1–266 (MTTNYIFVTG…DDYICKRFSL (266 aa)). CTP is bound at residue S14. Position 14 (S14) interacts with UTP. ATP is bound by residues 15–20 (SLGKGI) and D72. Positions 72 and 140 each coordinate Mg(2+). CTP is bound by residues 147 to 149 (DIE), 187 to 192 (KTKPTQ), and K223. UTP contacts are provided by residues 187–192 (KTKPTQ) and K223. Residue 239–241 (KDV) participates in ATP binding. The region spanning 291-542 (TIGMVGKYIE…VKAASEYQKR (252 aa)) is the Glutamine amidotransferase type-1 domain. G352 provides a ligand contact to L-glutamine. C379 functions as the Nucleophile; for glutamine hydrolysis in the catalytic mechanism. Residues 380–383 (LGMQ), E403, and R470 each bind L-glutamine. Active-site residues include H515 and E517.

This sequence belongs to the CTP synthase family. In terms of assembly, homotetramer.

The catalysed reaction is UTP + L-glutamine + ATP + H2O = CTP + L-glutamate + ADP + phosphate + 2 H(+). It catalyses the reaction L-glutamine + H2O = L-glutamate + NH4(+). It carries out the reaction UTP + NH4(+) + ATP = CTP + ADP + phosphate + 2 H(+). It functions in the pathway pyrimidine metabolism; CTP biosynthesis via de novo pathway; CTP from UDP: step 2/2. With respect to regulation, allosterically activated by GTP, when glutamine is the substrate; GTP has no effect on the reaction when ammonia is the substrate. The allosteric effector GTP functions by stabilizing the protein conformation that binds the tetrahedral intermediate(s) formed during glutamine hydrolysis. Inhibited by the product CTP, via allosteric rather than competitive inhibition. Catalyzes the ATP-dependent amination of UTP to CTP with either L-glutamine or ammonia as the source of nitrogen. Regulates intracellular CTP levels through interactions with the four ribonucleotide triphosphates. The sequence is that of CTP synthase from Klebsiella pneumoniae (strain 342).